A 529-amino-acid chain; its full sequence is Zinc finger protein 572 (529 aa).

The interval 1 to 62 (MEQEKKLLVS…EWSKRHRPQH (62 aa)) is disordered. Residues Lys5 and Lys6 each participate in a glycyl lysine isopeptide (Lys-Gly) (interchain with G-Cter in SUMO2) cross-link. A compositionally biased stretch (polar residues) spans 26 to 35 (TGDTSMNNLE). Positions 36 to 55 (TVHHNNSKADKLKEKPSEWS) are enriched in basic and acidic residues. 12 C2H2-type zinc fingers span residues 132 to 154 (YKCSECWKSFSNSSHLRTHQRTH), 160 to 182 (YKCSECAKCFCNSSHLIQHLRMH), 188 to 210 (YQCGECGKSFSNTSHLIIHERTH), 216 to 238 (YKCPECGKRFSSSSHLIQHHRSH), 244 to 266 (YECSVCGKGFSHSYVLIEHQRTH), 272 to 294 (YKCPDCGKSFSQSSSLIRHQRTH), 300 to 322 (YKCLECEKSFGCNSTLIKHQRIH), 328 to 350 (YQCPECGKNFSRSSNLITHQKMH), 384 to 406 (YRCCECGKSFGLSSHLIRHQRTH), 412 to 434 (YRCSECWKTFSQSSTLVIHQRTH), 440 to 462 (YKCPDCGESFSQSFNLIRHRRTH), and 468 to 490 (YKCTSCEKCFSRSAYLSQHRKIH).

Belongs to the krueppel C2H2-type zinc-finger protein family.

It is found in the nucleus. May be involved in transcriptional regulation. The sequence is that of Zinc finger protein 572 (ZNF572) from Homo sapiens (Human).